The primary structure comprises 267 residues: Hydroxyethylthiazole kinase (267 aa).

A substrate-binding site is contributed by methionine 44. ATP is bound by residues arginine 120 and threonine 165. Position 192 (glycine 192) interacts with substrate.

The protein belongs to the Thz kinase family. Requires Mg(2+) as cofactor.

The enzyme catalyses 5-(2-hydroxyethyl)-4-methylthiazole + ATP = 4-methyl-5-(2-phosphooxyethyl)-thiazole + ADP + H(+). Its pathway is cofactor biosynthesis; thiamine diphosphate biosynthesis; 4-methyl-5-(2-phosphoethyl)-thiazole from 5-(2-hydroxyethyl)-4-methylthiazole: step 1/1. In terms of biological role, catalyzes the phosphorylation of the hydroxyl group of 4-methyl-5-beta-hydroxyethylthiazole (THZ). The polypeptide is Hydroxyethylthiazole kinase (Carboxydothermus hydrogenoformans (strain ATCC BAA-161 / DSM 6008 / Z-2901)).